A 273-amino-acid chain; its full sequence is Ribosomal RNA small subunit methyltransferase A (273 aa).

S-adenosyl-L-methionine contacts are provided by N18, L20, G45, E66, D91, and N113.

The protein belongs to the class I-like SAM-binding methyltransferase superfamily. rRNA adenine N(6)-methyltransferase family. RsmA subfamily.

Its subcellular location is the cytoplasm. The catalysed reaction is adenosine(1518)/adenosine(1519) in 16S rRNA + 4 S-adenosyl-L-methionine = N(6)-dimethyladenosine(1518)/N(6)-dimethyladenosine(1519) in 16S rRNA + 4 S-adenosyl-L-homocysteine + 4 H(+). Functionally, specifically dimethylates two adjacent adenosines (A1518 and A1519) in the loop of a conserved hairpin near the 3'-end of 16S rRNA in the 30S particle. May play a critical role in biogenesis of 30S subunits. In Shigella dysenteriae serotype 1 (strain Sd197), this protein is Ribosomal RNA small subunit methyltransferase A.